The following is a 40-amino-acid chain: Photosystem II reaction center protein J (40 aa).

A helical transmembrane segment spans residues 8-28; it reads IPLWIIGTVTGLLVIGLIGIF.

This sequence belongs to the PsbJ family. PSII is composed of 1 copy each of membrane proteins PsbA, PsbB, PsbC, PsbD, PsbE, PsbF, PsbH, PsbI, PsbJ, PsbK, PsbL, PsbM, PsbT, PsbX, PsbY, PsbZ, Psb30/Ycf12, at least 3 peripheral proteins of the oxygen-evolving complex and a large number of cofactors. It forms dimeric complexes.

The protein localises to the plastid. It localises to the chloroplast thylakoid membrane. One of the components of the core complex of photosystem II (PSII). PSII is a light-driven water:plastoquinone oxidoreductase that uses light energy to abstract electrons from H(2)O, generating O(2) and a proton gradient subsequently used for ATP formation. It consists of a core antenna complex that captures photons, and an electron transfer chain that converts photonic excitation into a charge separation. This is Photosystem II reaction center protein J from Ipomoea purpurea (Common morning glory).